The chain runs to 178 residues: Ribosome maturation factor RimP (178 aa).

The protein belongs to the RimP family.

It localises to the cytoplasm. In terms of biological role, required for maturation of 30S ribosomal subunits. The polypeptide is Ribosome maturation factor RimP (Caulobacter vibrioides (strain ATCC 19089 / CIP 103742 / CB 15) (Caulobacter crescentus)).